We begin with the raw amino-acid sequence, 161 residues long: Zinc finger A20 and AN1 domain-containing stress-associated protein 4 (161 aa).

An A20-type zinc finger spans residues 10–44 (PEGHRLCVNNCGFFGSSATMNLCSNCYGDLCLKQQ). Zn(2+) contacts are provided by cysteine 16, cysteine 20, cysteine 32, and cysteine 35. Basic and acidic residues predominate over residues 76-85 (TTKKTEEKKP). A disordered region spans residues 76–99 (TTKKTEEKKPIQIPTEQPSPPQRP). The AN1-type zinc-finger motif lies at 96–142 (PQRPNRCTVCRKRVGLTGFMCRCGTTFCGSHRYPEVHGCTFDFKSAG). Positions 102, 105, 116, 118, 123, 126, 132, and 134 each coordinate Zn(2+).

May be involved in environmental stress response. This is Zinc finger A20 and AN1 domain-containing stress-associated protein 4 (SAP4) from Arabidopsis thaliana (Mouse-ear cress).